The sequence spans 244 residues: Orotidine 5'-phosphate decarboxylase (244 aa).

Substrate-binding positions include Asp10, Lys32, 59 to 68 (DLKLHDIPNT), Thr122, Arg184, Gln193, Gly213, and Arg214. The Proton donor role is filled by Lys61.

This sequence belongs to the OMP decarboxylase family. Type 1 subfamily. In terms of assembly, homodimer.

The catalysed reaction is orotidine 5'-phosphate + H(+) = UMP + CO2. Its pathway is pyrimidine metabolism; UMP biosynthesis via de novo pathway; UMP from orotate: step 2/2. Functionally, catalyzes the decarboxylation of orotidine 5'-monophosphate (OMP) to uridine 5'-monophosphate (UMP). The sequence is that of Orotidine 5'-phosphate decarboxylase from Bacillus caldolyticus.